The following is a 470-amino-acid chain: MPSLKTKGAAGKFASLLLVLALSACSRPAPPPETSGELRVGTRNSPATFYIGHDGETAGFEHDLILAFSRAQNWTLSWTEKSRPQALFDMLERREIHLAAAALPQAVVKDRHLISGPILFETPVHVVYRTADRAPRGVAGLAGKKLAFIIGSGHGPMLMRLKRKHPELSWAAVENVWPEELLAQLQAGKYDAVIINGMDFDAMRNFYPGLAVAFDLPYKQKIVWALSPGSSHAFRNALARFVERARSDGTIKRALERYFGHVKRLGSSDILGILQRRPQRLPDLREHFQEAQTLSGIDWRLLAAIGYQESQWNRLATSPTGVRGVMMLTGETADRMGVSDRLNARESILGGARYLALLKDALPARIAEPDRTWLALAAYNQGQGHLEDARRIAQARGGDPNSWADVKEALPYLSRGSYAKVMKYGYARGGEALRFAENIRNYYDILLRLEPEYDPLINLGRGEDGLPPPG.

An N-terminal signal peptide occupies residues 1 to 24; sequence MPSLKTKGAAGKFASLLLVLALSA. The non-LT domain stretch occupies residues 25–262; it reads CSRPAPPPET…RALERYFGHV (238 aa). Residues 263-470 form an LT domain region; the sequence is KRLGSSDILG…RGEDGLPPPG (208 aa). Glutamate 309 is an active-site residue.

In the N-terminal section; belongs to the bacterial solute-binding protein 3 family. It in the C-terminal section; belongs to the transglycosylase Slt family.

It localises to the cell outer membrane. The catalysed reaction is Exolytic cleavage of the (1-&gt;4)-beta-glycosidic linkage between N-acetylmuramic acid (MurNAc) and N-acetylglucosamine (GlcNAc) residues in peptidoglycan, from either the reducing or the non-reducing ends of the peptidoglycan chains, with concomitant formation of a 1,6-anhydrobond in the MurNAc residue.. Murein-degrading enzyme that degrades murein glycan strands and insoluble, high-molecular weight murein sacculi, with the concomitant formation of a 1,6-anhydromuramoyl product. Lytic transglycosylases (LTs) play an integral role in the metabolism of the peptidoglycan (PG) sacculus. Their lytic action creates space within the PG sacculus to allow for its expansion as well as for the insertion of various structures such as secretion systems and flagella. The sequence is that of Membrane-bound lytic murein transglycosylase F from Thiobacillus denitrificans (strain ATCC 25259 / T1).